Reading from the N-terminus, the 210-residue chain is MEALGGYPTRSSNPKAKKLTVLLSMTVGVGCLLLLQTQLLKPRRPSDFYSFEVKDAKGRTVSLEKYRGKASLVVNVASRSEQTESNYRSLQELHRELGPSHFNVLAFPCAQFGETETGSSRDSEAFAKATYGVTFPFFSRIKIMGSEAEPAFRFLTDSVQKVPRWNFWKFLVNPEGKVVRFWRTDEPMESIRREVTALVREIILKKRVEL.

The helical transmembrane segment at 21–40 (VLLSMTVGVGCLLLLQTQLL) threads the bilayer.

It belongs to the glutathione peroxidase family.

Its subcellular location is the membrane. It catalyses the reaction 2 glutathione + H2O2 = glutathione disulfide + 2 H2O. In Tetraodon nigroviridis (Spotted green pufferfish), this protein is Probable glutathione peroxidase 8 (gpx8).